Here is a 136-residue protein sequence, read N- to C-terminus: UPF0102 protein BBta_0181 (136 aa).

Belongs to the UPF0102 family.

The sequence is that of UPF0102 protein BBta_0181 from Bradyrhizobium sp. (strain BTAi1 / ATCC BAA-1182).